We begin with the raw amino-acid sequence, 251 residues long: uncharacterized protein (251 aa).

Residue 36-43 (GKQGTGKT) participates in ATP binding. The interval 230 to 251 (SDNKTENPSNPSLLTKIDDVTR) is disordered.

In terms of biological role, this protein may be involved in virus assembly. Essential for virus function. This is an uncharacterized protein from Sulfolobus spindle-shape virus 1 (SSV1).